A 485-amino-acid chain; its full sequence is 6-phosphogluconate dehydrogenase, decarboxylating (485 aa).

NADP(+)-binding positions include 12 to 17 (GLAVMG), 35 to 37 (NRT), 77 to 79 (VKA), and Asn-105. Substrate-binding positions include Asn-105 and 131 to 133 (SGG). Lys-186 (proton acceptor) is an active-site residue. 189 to 190 (HN) provides a ligand contact to substrate. Residue Glu-193 is the Proton donor of the active site. Tyr-194, Lys-263, Arg-290, Arg-449, and His-455 together coordinate substrate.

This sequence belongs to the 6-phosphogluconate dehydrogenase family. Homodimer.

It carries out the reaction 6-phospho-D-gluconate + NADP(+) = D-ribulose 5-phosphate + CO2 + NADPH. The protein operates within carbohydrate degradation; pentose phosphate pathway; D-ribulose 5-phosphate from D-glucose 6-phosphate (oxidative stage): step 3/3. In terms of biological role, catalyzes the oxidative decarboxylation of 6-phosphogluconate to ribulose 5-phosphate and CO(2), with concomitant reduction of NADP to NADPH. The chain is 6-phosphogluconate dehydrogenase, decarboxylating (6-PGD) from Cunninghamella elegans.